The following is a 308-amino-acid chain: Lysophosphatidic acid receptor 6 (308 aa).

The Extracellular segment spans residues 1–16 (MVSSNCSTEDSFKYTL). N-linked (GlcNAc...) asparagine glycosylation is present at Asn5. Residues 17-43 (YGCVFSMVFVLGLIANCVAIYIFTFTL) traverse the membrane as a helical segment. The Cytoplasmic segment spans residues 44-52 (KVRNETTTY). The helical transmembrane segment at 53–76 (MLNLAISDLLFVFTLPFRIYYFVV) threads the bilayer. The Extracellular portion of the chain corresponds to 77–89 (RNWPFGDVLCKIS). Cysteines 86 and 165 form a disulfide. A helical membrane pass occupies residues 90–109 (VTLFYTNMYGSILFLTCISV). The Cytoplasmic segment spans residues 110 to 130 (DRFLAIVHPFRSKTLRTKRNA). Residues 131 to 151 (RIVCVAVWITVLAGSTPASFF) form a helical membrane-spanning segment. Residues 152 to 178 (QSTNRQNNTEQRTCFENFPESTWKTYL) lie on the Extracellular side of the membrane. The helical transmembrane segment at 179–206 (SRIVIFIEIVGFFIPLILNVTCSTMVLR) threads the bilayer. At 207-224 (TLNKPLTLSRNKLSKKKV) the chain is on the cytoplasmic side. The chain crosses the membrane as a helical span at residues 225–250 (LKMIFVHLVIFCFCFVPYNITLILYS). Over 251-269 (LMRTQTWINCSVVTAVRTM) the chain is Extracellular. Residues 270 to 289 (YPVTLCIAVSNCCFDPIVYY) form a helical membrane-spanning segment. The S-palmitoyl cysteine moiety is linked to residue Cys281. Residues 290–308 (FTSDTNSELDKKQQVHQNT) are Cytoplasmic-facing.

This sequence belongs to the G-protein coupled receptor 1 family. In terms of tissue distribution, induced in activated T-cells.

It localises to the cell membrane. Functionally, binds to oleoyl-L-alpha-lysophosphatidic acid (LPA). Intracellular cAMP is involved in the receptor activation. This is Lysophosphatidic acid receptor 6 (LPAR6) from Gallus gallus (Chicken).